A 624-amino-acid polypeptide reads, in one-letter code: Chaperone protein HtpG (624 aa).

The a; substrate-binding stretch occupies residues 1–341 (MAVKQFKAES…SPDLSLNISR (341 aa)). Residues 342–550 (ELLQHDRQLK…DGELSIEMEK (209 aa)) are b. The c stretch occupies residues 551 to 624 (VLKMMPDNNN…FANDVASLMK (74 aa)).

This sequence belongs to the heat shock protein 90 family. As to quaternary structure, homodimer.

Its subcellular location is the cytoplasm. In terms of biological role, molecular chaperone. Has ATPase activity. In Clostridium acetobutylicum (strain ATCC 824 / DSM 792 / JCM 1419 / IAM 19013 / LMG 5710 / NBRC 13948 / NRRL B-527 / VKM B-1787 / 2291 / W), this protein is Chaperone protein HtpG.